The following is a 472-amino-acid chain: ATP synthase subunit beta (472 aa).

An ATP-binding site is contributed by 150–157; that stretch reads GGAGVGKT.

It belongs to the ATPase alpha/beta chains family. As to quaternary structure, F-type ATPases have 2 components, CF(1) - the catalytic core - and CF(0) - the membrane proton channel. CF(1) has five subunits: alpha(3), beta(3), gamma(1), delta(1), epsilon(1). CF(0) has four main subunits: a, b, b' and c.

It is found in the cellular chromatophore membrane. The enzyme catalyses ATP + H2O + 4 H(+)(in) = ADP + phosphate + 5 H(+)(out). Its function is as follows. Produces ATP from ADP in the presence of a proton gradient across the membrane. The catalytic sites are hosted primarily by the beta subunits. This chain is ATP synthase subunit beta, found in Rhodobacter capsulatus (Rhodopseudomonas capsulata).